We begin with the raw amino-acid sequence, 209 residues long: MAAILGKKIGMTSIYNANREAEPCTVIQAGPCFVSQVKTTENDGYEAYQLSIGERKEAKVSKPLRGHFAKAGIAPGYKVVEFGKDDMGLDLEQGSAVSVEIFSAGDAVEVQGVSKGKGFAGVVKRHNFSGGQRTHGQSDRLRAPGSVGGASDPSRTFKGTKMGGRMGGKTVKVKGLEIVKVIPESNLLVIKGSVPGVKNSYVQIVSSKK.

Residues 127-164 (NFSGGQRTHGQSDRLRAPGSVGGASDPSRTFKGTKMGG) are disordered.

It belongs to the universal ribosomal protein uL3 family. In terms of assembly, part of the 50S ribosomal subunit. Forms a cluster with proteins L14 and L19.

Functionally, one of the primary rRNA binding proteins, it binds directly near the 3'-end of the 23S rRNA, where it nucleates assembly of the 50S subunit. The protein is Large ribosomal subunit protein uL3 of Chlorobium phaeobacteroides (strain BS1).